The sequence spans 189 residues: Copper transport protein CTR2 (189 aa).

Over 1–81 (MDDKKTWSTV…VVFEWWHIKT (81 aa)) the chain is Cytoplasmic. Residues 82 to 102 (LPGLILSCLAIFGLAYLYEYL) traverse the membrane as a helical segment. Residues 103 to 142 (KYCVHKRQLSQRVLLPNRSLTKINQADKVSNSILYGLQVG) lie on the Vacuolar side of the membrane. A helical transmembrane segment spans residues 143 to 163 (FSFMLMLVFMTYNGWLMLAVV). Over 164 to 189 (CGAIWGNYSWCTSYSPEIDDSSLACH) the chain is Cytoplasmic.

It belongs to the copper transporter (Ctr) (TC 1.A.56) family. SLC31A subfamily. In terms of assembly, homomultimer.

Its subcellular location is the vacuole membrane. Its function is as follows. Provides bioavailable copper via mobilization of vacuolar copper stores and export to the cytoplasm. In Saccharomyces cerevisiae (strain ATCC 204508 / S288c) (Baker's yeast), this protein is Copper transport protein CTR2 (CTR2).